The chain runs to 34 residues: MEVNILAFIATALFILVPTSFLLIIYVKTVSQNN.

A helical membrane pass occupies residues 5–25 (ILAFIATALFILVPTSFLLII).

Belongs to the PsbM family. In terms of assembly, PSII is composed of 1 copy each of membrane proteins PsbA, PsbB, PsbC, PsbD, PsbE, PsbF, PsbH, PsbI, PsbJ, PsbK, PsbL, PsbM, PsbT, PsbX, PsbY, PsbZ, Psb30/Ycf12, at least 3 peripheral proteins of the oxygen-evolving complex and a large number of cofactors. It forms dimeric complexes.

Its subcellular location is the plastid. It is found in the chloroplast thylakoid membrane. Its function is as follows. One of the components of the core complex of photosystem II (PSII). PSII is a light-driven water:plastoquinone oxidoreductase that uses light energy to abstract electrons from H(2)O, generating O(2) and a proton gradient subsequently used for ATP formation. It consists of a core antenna complex that captures photons, and an electron transfer chain that converts photonic excitation into a charge separation. This subunit is found at the monomer-monomer interface. The polypeptide is Photosystem II reaction center protein M (Triticum aestivum (Wheat)).